The sequence spans 257 residues: MSSAPNGRKKRPSRSTRSSIFQISKPPLQSGDWERRGSGSESAHKTQRALDDCKMLVQEFNTQVALYRELVISIGDVSVSCPSLRAEMHKTRTKGCEMARQAHQKLAAISGPEDGEIHPEICRLYIQLQCCLEMYTTEMLKSICLLGSLQFHRKGKEASGGAKNLDSKIEENAETPALEDSLSSPLESQQQCWQVATDIENTERDMREMKNLLSKLRETMPLPLKNQDDSSLLNLTPYPMVRRRKRRFFGLCCLVSS.

Residues 1-45 (MSSAPNGRKKRPSRSTRSSIFQISKPPLQSGDWERRGSGSESAHK) are disordered. The segment covering 32-45 (DWERRGSGSESAHK) has biased composition (basic and acidic residues). The Nuclear localization signal signature appears at 242 to 247 (RRRKRR). Residues C252 and C253 are each lipidated (S-palmitoyl cysteine).

Belongs to the RGS7BP/RGS9BP family. In terms of assembly, interacts with 'R7' family proteins RGS6, RGS7, RGS9 and RGS11. Component of some R7-Gbeta5 complex composed of some R7 protein (RGS6, RGS7, RGS9 or RGS11), Gbeta5 (GNB5) and RGS7BP. In terms of processing, palmitoylated. Undergoes rapid palmitoylation turnover. De novo and turnover palmitoylation are both mediated by ZDHHC2. Palmitoylation regulates the cell membrane and nuclear shuttling and the regulation of GPCR signaling. Upon depalmitoylation, it is targeted from the plasma membrane into the nucleus. GPCR signaling inhibits depalmitoylation and promotes localization to the plasma membrane. Specifically expressed in the central nervous system including the retina but not in other non-neuronal tissues (at protein level).

It is found in the nucleus. It localises to the cytoplasm. The protein localises to the cell membrane. Functionally, regulator of G protein-coupled receptor (GPCR) signaling. Regulatory subunit of the R7-Gbeta5 complexes that acts by controlling the subcellular location of the R7-Gbeta5 complexes. When palmitoylated, it targets the R7-Gbeta5 complexes to the plasma membrane, leading to inhibit G protein alpha subunits. When it is unpalmitoylated, the R7-Gbeta5 complexes undergo a nuclear/cytoplasmic shuttling. May also act by controlling the proteolytic stability of R7 proteins, probably by protecting them from degradation. This is Regulator of G-protein signaling 7-binding protein (Rgs7bp) from Mus musculus (Mouse).